Reading from the N-terminus, the 388-residue chain is Pentatricopeptide repeat-containing protein 2, mitochondrial (388 aa).

The stretch at 166-200 is one PPR repeat; it reads TSFNILMDMLFIKGKYKSALQVLIEMKNQDVKFTK. Serine 382 is subject to Phosphoserine.

The protein belongs to the PTCD2 family.

It is found in the mitochondrion. Functionally, involved in mitochondrial RNA maturation and mitochondrial respiratory chain function. This Homo sapiens (Human) protein is Pentatricopeptide repeat-containing protein 2, mitochondrial (PTCD2).